The following is an 89-amino-acid chain: Calsenilin isoform 4 (89 aa).

The tract at residues 27 to 57 is disordered; the sequence is SSRDAEDQGSREGIGWQPPGRSWAHTTEQEG.

In terms of tissue distribution, isoform 1 or isoform 4 (T+ forms) are expressed at equal levels with isoform 2 or isoform 3 (T- forms) in brain.

Unknown for isoform 4. Csen is involved in calcium-dependent transcriptional repression, regulation of potassium channels, and perhaps in processing of PSEN2 and apoptosis. The sequence is that of Calsenilin isoform 4 (Kcnip3) from Mus musculus (Mouse).